The primary structure comprises 237 residues: Ribosomal RNA small subunit methyltransferase G (237 aa).

S-adenosyl-L-methionine contacts are provided by residues Gly78, Phe83, 129 to 130 (AE), and Arg148.

The protein belongs to the methyltransferase superfamily. RNA methyltransferase RsmG family.

Its subcellular location is the cytoplasm. Functionally, specifically methylates the N7 position of a guanine in 16S rRNA. The protein is Ribosomal RNA small subunit methyltransferase G of Streptococcus pyogenes serotype M1.